The sequence spans 355 residues: Uroporphyrinogen decarboxylase (355 aa).

Substrate contacts are provided by residues 27 to 31, aspartate 78, tyrosine 155, serine 210, and histidine 328; that span reads RQAGR.

The protein belongs to the uroporphyrinogen decarboxylase family. As to quaternary structure, homodimer.

Its subcellular location is the cytoplasm. The catalysed reaction is uroporphyrinogen III + 4 H(+) = coproporphyrinogen III + 4 CO2. It functions in the pathway porphyrin-containing compound metabolism; protoporphyrin-IX biosynthesis; coproporphyrinogen-III from 5-aminolevulinate: step 4/4. Functionally, catalyzes the decarboxylation of four acetate groups of uroporphyrinogen-III to yield coproporphyrinogen-III. In Pseudomonas paraeruginosa (strain DSM 24068 / PA7) (Pseudomonas aeruginosa (strain PA7)), this protein is Uroporphyrinogen decarboxylase.